A 37-amino-acid polypeptide reads, in one-letter code: Large ribosomal subunit protein bL36 (37 aa).

It belongs to the bacterial ribosomal protein bL36 family.

The protein is Large ribosomal subunit protein bL36 of Syntrophotalea carbinolica (strain DSM 2380 / NBRC 103641 / GraBd1) (Pelobacter carbinolicus).